We begin with the raw amino-acid sequence, 270 residues long: Myelin protein zero-like protein 1 (270 aa).

The N-terminal stretch at 1–35 (MAEAVGAVTLIAAPARRRWLWSALAAMLGLLTARI) is a signal peptide. In terms of domain architecture, Ig-like V-type spans 36-151 (SALEVHTPKE…DIVVRPGQIR (116 aa)). Residues 36–162 (SALEVHTPKE…HVVEIDNLLV (127 aa)) are Extracellular-facing. Asparagine 50 and asparagine 130 each carry an N-linked (GlcNAc...) asparagine glycan. An intrachain disulfide couples cysteine 58 to cysteine 135. The helical transmembrane segment at 163–183 (FLVWVVVGTVTAVVLGLTLLI) threads the bilayer. Residues 184–270 (SLVLVVLYRR…SVVYADIRKD (87 aa)) are Cytoplasmic-facing. The interval 201–257 (TGCSTSERLSPVKQAPRKCPSDTEGLVKSPPSAGSHQGPVIYAQLDHSGGHHSGKIN) is disordered. Phosphoserine occurs at positions 204, 206, 210, and 221. The ITIM motif 1 signature appears at 240–245 (VIYAQL). Tyrosine 242 bears the Phosphotyrosine mark. Serine 261 carries the phosphoserine modification. The short motif at 262–267 (VVYADI) is the ITIM motif 2 element. A Phosphotyrosine modification is found at tyrosine 264.

It belongs to the myelin P0 protein family. Interacts with phosphorylated PTPN11/SHP-2. Phosphorylated on tyrosine residues upon stimulation with pervanadate and concanavalin-A (ConA). Phosphorylation at Tyr-242 and Tyr-264 is required for interaction with PTPN11/SHP-2. Dephosphorylated by PTPN11/SHP-2 (in vitro). Post-translationally, N-glycosylated.

Its subcellular location is the membrane. Functionally, cell surface receptor, which is involved in signal transduction processes. Recruits PTPN11/SHP-2 to the cell membrane and is a putative substrate of PTPN11/SHP-2. Is a major receptor for concanavalin-A (ConA) and is involved in cellular signaling induced by ConA, which probably includes Src family tyrosine-protein kinases. May be involved in regulation of integrin-mediated cell motility. This is Myelin protein zero-like protein 1 (Mpzl1) from Rattus norvegicus (Rat).